A 462-amino-acid chain; its full sequence is Hydroxymethylglutaryl-CoA synthase (462 aa).

Glutamate 86 functions as the Proton donor/acceptor in the catalytic mechanism. Cysteine 120 serves as the catalytic Acyl-thioester intermediate. The (3S)-3-hydroxy-3-methylglutaryl-CoA site is built by cysteine 120, threonine 211, histidine 261, lysine 270, asparagine 338, and serine 372. Histidine 261 acts as the Proton donor/acceptor in catalysis.

The protein belongs to the thiolase-like superfamily. HMG-CoA synthase family.

The enzyme catalyses acetoacetyl-CoA + acetyl-CoA + H2O = (3S)-3-hydroxy-3-methylglutaryl-CoA + CoA + H(+). Its pathway is siderophore biosynthesis. In terms of biological role, hydroxymethylglutaryl-CoA synthase involved in the biosynthesis of siderophore ferrichrome A which is contributing to organismal virulence. The first step of ferrichrome A biosynthesis is performed by the HMG-CoA synthase hcs1 which catalyzes the generation of HMG-CoA and CoA using acetoacetyl-CoA and acetyl-CoA as substrates. The enoyl-CoA isomerase/hydratase fer4 then catalyzes the conversion of hcs1-produced HMG-CoA to methylglutaconyl-CoA. The acyltransferase fer5 then fuses the fer4-generated methylglutaconyl-CoA with sid1-generated hydroxyornithine to yield methylglutaconyl hydroxyornithine. Methylglutaconyl hydroxyornithine is then available for use by the NRPS fer3 to generate ferrichrome A. This Mycosarcoma maydis (Corn smut fungus) protein is Hydroxymethylglutaryl-CoA synthase.